We begin with the raw amino-acid sequence, 702 residues long: Polyribonucleotide nucleotidyltransferase (702 aa).

Residues Asp-487 and Asp-493 each coordinate Mg(2+). In terms of domain architecture, KH spans 554 to 613 (PRLLTIKIHPDKIREVIGKGGSTIQAITKETGTQIDIQDDGTIVIASVNAIAAQAAKARI). Positions 623–691 (GRIYEGKVAK…KQGRIRLSMK (69 aa)) constitute an S1 motif domain.

The protein belongs to the polyribonucleotide nucleotidyltransferase family. As to quaternary structure, component of the RNA degradosome, which is a multiprotein complex involved in RNA processing and mRNA degradation. Requires Mg(2+) as cofactor.

It is found in the cytoplasm. It carries out the reaction RNA(n+1) + phosphate = RNA(n) + a ribonucleoside 5'-diphosphate. Functionally, involved in mRNA degradation. Catalyzes the phosphorolysis of single-stranded polyribonucleotides processively in the 3'- to 5'-direction. This chain is Polyribonucleotide nucleotidyltransferase, found in Stenotrophomonas maltophilia (strain R551-3).